The primary structure comprises 329 residues: Tryptophan--tRNA ligase (329 aa).

ATP-binding positions include 9–11 (QPS) and 17–18 (GN). A 'HIGH' region motif is present at residues 10-18 (PSGIPTIGN). Aspartate 133 contributes to the L-tryptophan binding site. Residues 145-147 (GDD), valine 184, and 193-197 (KMSKS) each bind ATP. The 'KMSKS' region motif lies at 193-197 (KMSKS).

This sequence belongs to the class-I aminoacyl-tRNA synthetase family. In terms of assembly, homodimer.

It localises to the cytoplasm. It catalyses the reaction tRNA(Trp) + L-tryptophan + ATP = L-tryptophyl-tRNA(Trp) + AMP + diphosphate + H(+). Catalyzes the attachment of tryptophan to tRNA(Trp). The sequence is that of Tryptophan--tRNA ligase from Staphylococcus aureus (strain MRSA252).